We begin with the raw amino-acid sequence, 131 residues long: Profilin-3 (131 aa).

Residues C13 and C115 are joined by a disulfide bond. The Involved in PIP2 interaction motif lies at 81 to 97 (AVIRGKKGAGGITIKKT). T111 carries the post-translational modification Phosphothreonine.

This sequence belongs to the profilin family. Occurs in many kinds of cells as a complex with monomeric actin in a 1:1 ratio. In terms of processing, phosphorylated by MAP kinases.

It localises to the cytoplasm. It is found in the cytoskeleton. In terms of biological role, binds to actin and affects the structure of the cytoskeleton. At high concentrations, profilin prevents the polymerization of actin, whereas it enhances it at low concentrations. This chain is Profilin-3, found in Olea europaea (Common olive).